Here is a 296-residue protein sequence, read N- to C-terminus: Polyamine aminopropyltransferase (296 aa).

The PABS domain maps to 16-251 (HLWYFEYYTG…GMWSYTFASK (236 aa)). Q46 serves as a coordination point for S-methyl-5'-thioadenosine. H77 and D101 together coordinate spermidine. S-methyl-5'-thioadenosine-binding positions include E121 and 152 to 153 (NG). D170 serves as the catalytic Proton acceptor. 170–173 (DSTD) is a binding site for spermidine.

Belongs to the spermidine/spermine synthase family. As to quaternary structure, homodimer or homotetramer.

The protein localises to the cytoplasm. The enzyme catalyses S-adenosyl 3-(methylsulfanyl)propylamine + putrescine = S-methyl-5'-thioadenosine + spermidine + H(+). It functions in the pathway amine and polyamine biosynthesis; spermidine biosynthesis; spermidine from putrescine: step 1/1. In terms of biological role, catalyzes the irreversible transfer of a propylamine group from the amino donor S-adenosylmethioninamine (decarboxy-AdoMet) to putrescine (1,4-diaminobutane) to yield spermidine. The protein is Polyamine aminopropyltransferase of Thermotoga petrophila (strain ATCC BAA-488 / DSM 13995 / JCM 10881 / RKU-1).